A 40-amino-acid chain; its full sequence is Photosystem II reaction center protein J (40 aa).

The chain crosses the membrane as a helical span at residues 8–28; sequence IPLWLIGTVTGIAVIGLIGVF.

Belongs to the PsbJ family. As to quaternary structure, PSII is composed of 1 copy each of membrane proteins PsbA, PsbB, PsbC, PsbD, PsbE, PsbF, PsbH, PsbI, PsbJ, PsbK, PsbL, PsbM, PsbT, PsbX, PsbY, PsbZ, Psb30/Ycf12, at least 3 peripheral proteins of the oxygen-evolving complex and a large number of cofactors. It forms dimeric complexes.

It localises to the plastid. The protein resides in the chloroplast thylakoid membrane. Functionally, one of the components of the core complex of photosystem II (PSII). PSII is a light-driven water:plastoquinone oxidoreductase that uses light energy to abstract electrons from H(2)O, generating O(2) and a proton gradient subsequently used for ATP formation. It consists of a core antenna complex that captures photons, and an electron transfer chain that converts photonic excitation into a charge separation. In Oryza nivara (Indian wild rice), this protein is Photosystem II reaction center protein J.